Here is a 251-residue protein sequence, read N- to C-terminus: Geranylgeranylglyceryl phosphate synthase (251 aa).

2 residues coordinate Mg(2+): aspartate 25 and serine 54. Sn-glycerol 1-phosphate is bound by residues 173 to 179 (YLEAGSG), 204 to 205 (GG), and 226 to 227 (GT).

The protein belongs to the GGGP/HepGP synthase family. Group II subfamily. It depends on Mg(2+) as a cofactor.

It localises to the cytoplasm. It catalyses the reaction sn-glycerol 1-phosphate + (2E,6E,10E)-geranylgeranyl diphosphate = sn-3-O-(geranylgeranyl)glycerol 1-phosphate + diphosphate. Its pathway is membrane lipid metabolism; glycerophospholipid metabolism. In terms of biological role, prenyltransferase that catalyzes the transfer of the geranylgeranyl moiety of geranylgeranyl diphosphate (GGPP) to the C3 hydroxyl of sn-glycerol-1-phosphate (G1P). This reaction is the first ether-bond-formation step in the biosynthesis of archaeal membrane lipids. The polypeptide is Geranylgeranylglyceryl phosphate synthase (Pyrococcus furiosus (strain ATCC 43587 / DSM 3638 / JCM 8422 / Vc1)).